The sequence spans 290 residues: 4-hydroxybenzoate octaprenyltransferase (290 aa).

A run of 8 helical transmembrane segments spans residues 21–41 (IGTM…ADGM), 44–64 (LRVL…GCII), 97–117 (LFVV…PLVV), 143–163 (FLGV…TGEV), 168–188 (WWLF…YAMV), 211–231 (EIIG…GWSG), 235–255 (LLYG…QRLI), and 270–290 (NNWA…FAAL).

This sequence belongs to the UbiA prenyltransferase family. It depends on Mg(2+) as a cofactor.

It is found in the cell inner membrane. It catalyses the reaction all-trans-octaprenyl diphosphate + 4-hydroxybenzoate = 4-hydroxy-3-(all-trans-octaprenyl)benzoate + diphosphate. It participates in cofactor biosynthesis; ubiquinone biosynthesis. Functionally, catalyzes the prenylation of para-hydroxybenzoate (PHB) with an all-trans polyprenyl group. Mediates the second step in the final reaction sequence of ubiquinone-8 (UQ-8) biosynthesis, which is the condensation of the polyisoprenoid side chain with PHB, generating the first membrane-bound Q intermediate 3-octaprenyl-4-hydroxybenzoate. This chain is 4-hydroxybenzoate octaprenyltransferase, found in Shewanella amazonensis (strain ATCC BAA-1098 / SB2B).